An 83-amino-acid chain; its full sequence is Cell division topological specificity factor (83 aa).

Belongs to the MinE family.

Functionally, prevents the cell division inhibition by proteins MinC and MinD at internal division sites while permitting inhibition at polar sites. This ensures cell division at the proper site by restricting the formation of a division septum at the midpoint of the long axis of the cell. This Buchnera aphidicola subsp. Acyrthosiphon pisum (strain 5A) protein is Cell division topological specificity factor.